The primary structure comprises 582 residues: PTS system lactose-specific EIICB component (582 aa).

Positions 8–409 (IEKGKPFFEK…VVDVIIYYPF (402 aa)) constitute a PTS EIIC type-3 domain. 9 helical membrane-spanning segments follow: residues 30–50 (GFIA…ITYV), 64–84 (GILM…VAGT), 103–123 (INFI…AADP), 137–157 (KGLL…NFFV), 176–196 (VFKD…LDLL), 222–242 (GWIG…VGIH), 283–303 (FVAT…FMWL), 339–359 (VFFI…KFFV), and 381–401 (IVMG…LIVV). Residues 453–473 (ASEADTDDTSSVDETTSTSST) form a disordered region. The segment covering 464-473 (VDETTSTSST) has biased composition (low complexity). Residues 479–582 (QTNVLVLCAG…LEFVKQQFNN (104 aa)) form the PTS EIIB type-3 domain. Cysteine 486 functions as the Phosphocysteine intermediate; for EIIB activity in the catalytic mechanism. Residue cysteine 486 is modified to Phosphocysteine; by EIIA.

The protein localises to the cell membrane. It carries out the reaction lactose(out) + N(pros)-phospho-L-histidyl-[protein] = lactose 6-phosphate(in) + L-histidyl-[protein]. The phosphoenolpyruvate-dependent sugar phosphotransferase system (sugar PTS), a major carbohydrate active transport system, catalyzes the phosphorylation of incoming sugar substrates concomitantly with their translocation across the cell membrane. The enzyme II LacEF PTS system is involved in lactose transport. The sequence is that of PTS system lactose-specific EIICB component from Staphylococcus epidermidis (strain ATCC 35984 / DSM 28319 / BCRC 17069 / CCUG 31568 / BM 3577 / RP62A).